Reading from the N-terminus, the 213-residue chain is NADH-quinone oxidoreductase subunit C (213 aa).

This sequence belongs to the complex I 30 kDa subunit family. In terms of assembly, NDH-1 is composed of 14 different subunits. Subunits NuoB, C, D, E, F, and G constitute the peripheral sector of the complex.

The protein localises to the cell inner membrane. It catalyses the reaction a quinone + NADH + 5 H(+)(in) = a quinol + NAD(+) + 4 H(+)(out). NDH-1 shuttles electrons from NADH, via FMN and iron-sulfur (Fe-S) centers, to quinones in the respiratory chain. The immediate electron acceptor for the enzyme in this species is believed to be ubiquinone. Couples the redox reaction to proton translocation (for every two electrons transferred, four hydrogen ions are translocated across the cytoplasmic membrane), and thus conserves the redox energy in a proton gradient. The chain is NADH-quinone oxidoreductase subunit C from Rhodospirillum rubrum (strain ATCC 11170 / ATH 1.1.1 / DSM 467 / LMG 4362 / NCIMB 8255 / S1).